The primary structure comprises 206 residues: Acidic proline-rich protein PRP33 (206 aa).

The first 13 residues, 1–13, serve as a signal peptide directing secretion; the sequence is MLVVLLTAALLVL. The interval 15 to 206 is disordered; it reads SAHGSDEEVI…EQPSYLWFSS (192 aa). The segment covering 55 to 71 has biased composition (acidic residues); sequence ENGDGDDSDDGDDDGSG. Repeat copies occupy residues 80–97, 98–115, 116–133, 134–152, 153–170, and 171–189. The segment at 80–189 is 6 X 18 AA approximate tandem repeats; that stretch reads PPPHGGNHQR…RPPQPRKPQD (110 aa). Residues 103–112 show a composition bias toward low complexity; sequence GPQTSSQPGN. The segment covering 113–174 has biased composition (pro residues); it reads PQGPPPQGGP…PGNPQGPPPQ (62 aa).

The protein resides in the secreted. May protect teeth by binding to tannins. In Rattus norvegicus (Rat), this protein is Acidic proline-rich protein PRP33 (Prpg1).